The chain runs to 422 residues: Metallocarboxypeptidase A (422 aa).

The N-terminal stretch at 1–17 is a signal peptide; that stretch reads MRSVLSLALLAANVVTA. A propeptide spans 18-112 (activation peptide); sequence AVVSPFDYSG…FEAYSAGYAP (95 aa). The Peptidase M14 domain maps to 119–419; it reads SYHSYQDHLS…AGTVAMLKAV (301 aa). Residues His-179 and Glu-182 each contribute to the Zn(2+) site. Substrate contacts are provided by residues 179-182, Arg-237, and 254-255; these read HARE and NR. A disulfide bridge links Cys-248 with Cys-271. His-309 provides a ligand contact to Zn(2+). 310–311 provides a ligand contact to substrate; it reads SY. Glu-385 (proton donor/acceptor) is an active-site residue.

It belongs to the peptidase M14 family. Zn(2+) serves as cofactor.

The protein localises to the secreted. In terms of biological role, extracellular metalloprotease that contributes to pathogenicity. The sequence is that of Metallocarboxypeptidase A (MCPA) from Trichophyton rubrum (Athlete's foot fungus).